The chain runs to 378 residues: Erythronate-4-phosphate dehydrogenase (378 aa).

The substrate site is built by Ser45 and Thr66. The NAD(+) site is built by Asp146 and Thr175. Arg208 is a catalytic residue. An NAD(+)-binding site is contributed by Asp232. Residue Glu237 is part of the active site. The active-site Proton donor is His254. Residue Gly257 participates in NAD(+) binding. Tyr258 serves as a coordination point for substrate.

It belongs to the D-isomer specific 2-hydroxyacid dehydrogenase family. PdxB subfamily. As to quaternary structure, homodimer.

The protein localises to the cytoplasm. The catalysed reaction is 4-phospho-D-erythronate + NAD(+) = (R)-3-hydroxy-2-oxo-4-phosphooxybutanoate + NADH + H(+). It functions in the pathway cofactor biosynthesis; pyridoxine 5'-phosphate biosynthesis; pyridoxine 5'-phosphate from D-erythrose 4-phosphate: step 2/5. Functionally, catalyzes the oxidation of erythronate-4-phosphate to 3-hydroxy-2-oxo-4-phosphonooxybutanoate. In Escherichia coli O7:K1 (strain IAI39 / ExPEC), this protein is Erythronate-4-phosphate dehydrogenase.